The sequence spans 573 residues: Arginine--tRNA ligase (573 aa).

The 'HIGH' region motif lies at 122 to 132 (PNLAKEMHVGH).

Belongs to the class-I aminoacyl-tRNA synthetase family. Monomer.

It localises to the cytoplasm. It carries out the reaction tRNA(Arg) + L-arginine + ATP = L-arginyl-tRNA(Arg) + AMP + diphosphate. The polypeptide is Arginine--tRNA ligase (Laribacter hongkongensis (strain HLHK9)).